The chain runs to 759 residues: Phosphoribosylformylglycinamidine synthase subunit PurL (759 aa).

Histidine 46 is an active-site residue. Tyrosine 49 and lysine 88 together coordinate ATP. Residue glutamate 90 participates in Mg(2+) binding. Substrate is bound by residues 91-94 and arginine 113; that span reads SHNH. Histidine 92 acts as the Proton acceptor in catalysis. Residue aspartate 114 participates in Mg(2+) binding. Glutamine 237 serves as a coordination point for substrate. Residue aspartate 265 participates in Mg(2+) binding. Residue 309–311 participates in substrate binding; that stretch reads ESQ. Positions 498 and 535 each coordinate ATP. Residue asparagine 536 coordinates Mg(2+). Serine 538 is a substrate binding site.

The protein belongs to the FGAMS family. As to quaternary structure, monomer. Part of the FGAM synthase complex composed of 1 PurL, 1 PurQ and 2 PurS subunits.

The protein localises to the cytoplasm. It carries out the reaction N(2)-formyl-N(1)-(5-phospho-beta-D-ribosyl)glycinamide + L-glutamine + ATP + H2O = 2-formamido-N(1)-(5-O-phospho-beta-D-ribosyl)acetamidine + L-glutamate + ADP + phosphate + H(+). Its pathway is purine metabolism; IMP biosynthesis via de novo pathway; 5-amino-1-(5-phospho-D-ribosyl)imidazole from N(2)-formyl-N(1)-(5-phospho-D-ribosyl)glycinamide: step 1/2. In terms of biological role, part of the phosphoribosylformylglycinamidine synthase complex involved in the purines biosynthetic pathway. Catalyzes the ATP-dependent conversion of formylglycinamide ribonucleotide (FGAR) and glutamine to yield formylglycinamidine ribonucleotide (FGAM) and glutamate. The FGAM synthase complex is composed of three subunits. PurQ produces an ammonia molecule by converting glutamine to glutamate. PurL transfers the ammonia molecule to FGAR to form FGAM in an ATP-dependent manner. PurS interacts with PurQ and PurL and is thought to assist in the transfer of the ammonia molecule from PurQ to PurL. This chain is Phosphoribosylformylglycinamidine synthase subunit PurL, found in Anaeromyxobacter sp. (strain K).